Reading from the N-terminus, the 177-residue chain is Adenine phosphoribosyltransferase (177 aa).

Belongs to the purine/pyrimidine phosphoribosyltransferase family. Homodimer.

It is found in the cytoplasm. It catalyses the reaction AMP + diphosphate = 5-phospho-alpha-D-ribose 1-diphosphate + adenine. The protein operates within purine metabolism; AMP biosynthesis via salvage pathway; AMP from adenine: step 1/1. Catalyzes a salvage reaction resulting in the formation of AMP, that is energically less costly than de novo synthesis. The sequence is that of Adenine phosphoribosyltransferase from Cutibacterium acnes (strain DSM 16379 / KPA171202) (Propionibacterium acnes).